A 395-amino-acid chain; its full sequence is Elongation factor Tu (395 aa).

A tr-type G domain is found at lysine 10 to glutamine 204. Positions glycine 19–threonine 26 are G1. Residue glycine 19–threonine 26 participates in GTP binding. Threonine 26 lines the Mg(2+) pocket. The G2 stretch occupies residues glycine 60–serine 64. The segment at aspartate 81–glycine 84 is G3. GTP-binding positions include aspartate 81–histidine 85 and asparagine 136–aspartate 139. Positions asparagine 136–aspartate 139 are G4. The segment at serine 174–leucine 176 is G5.

Belongs to the TRAFAC class translation factor GTPase superfamily. Classic translation factor GTPase family. EF-Tu/EF-1A subfamily. In terms of assembly, monomer.

It localises to the cytoplasm. It carries out the reaction GTP + H2O = GDP + phosphate + H(+). Its function is as follows. GTP hydrolase that promotes the GTP-dependent binding of aminoacyl-tRNA to the A-site of ribosomes during protein biosynthesis. The sequence is that of Elongation factor Tu from Geobacillus sp. (strain WCH70).